We begin with the raw amino-acid sequence, 873 residues long: Chitin synthase F (873 aa).

The disordered stretch occupies residues 1–105 (MEDAHDQSSR…KSGSGLRRYP (105 aa)). 3 stretches are compositionally biased toward polar residues: residues 33–46 (SYPS…SQSL), 58–72 (ISSQ…QNPS), and 80–98 (ESEV…TKSG). An N-linked (GlcNAc...) asparagine glycan is attached at Asn-506. 7 consecutive transmembrane segments (helical) span residues 532 to 554 (LVFL…FSLA), 588 to 608 (IVNN…FFLA), 621 to 641 (ILTF…SFYL), 672 to 692 (GLVL…SILY), 702 to 722 (SWAY…YAFC), 802 to 822 (LVLL…NDSV), and 841 to 861 (VILW…LWFL).

The protein belongs to the chitin synthase family. Class III subfamily.

The protein localises to the cell membrane. It catalyses the reaction [(1-&gt;4)-N-acetyl-beta-D-glucosaminyl](n) + UDP-N-acetyl-alpha-D-glucosamine = [(1-&gt;4)-N-acetyl-beta-D-glucosaminyl](n+1) + UDP + H(+). In terms of biological role, polymerizes chitin, a structural polymer of the cell wall and septum, by transferring the sugar moiety of UDP-GlcNAc to the non-reducing end of the growing chitin polymer. Plays an important role in septal growth or maintenance. Mediates colony spore formation. The protein is Chitin synthase F of Aspergillus niger (strain ATCC MYA-4892 / CBS 513.88 / FGSC A1513).